Reading from the N-terminus, the 364-residue chain is Formate dehydrogenase (364 aa).

Val93 and Asn119 together coordinate substrate. NAD(+)-binding positions include 174-175 (RI), Asp195, 230-234 (PLHAG), Thr256, Asp282, and 311-314 (HYSG).

Belongs to the D-isomer specific 2-hydroxyacid dehydrogenase family. FDH subfamily. As to quaternary structure, homodimer.

Its subcellular location is the cytoplasm. The catalysed reaction is formate + NAD(+) = CO2 + NADH. Its activity is regulated as follows. Cu(2+), Hg and p-chloromercuribenzoate are strong inhibitors of enzyme activity and Ca(2+), Mg(2+), Zn(2+), Mn(2+), Cd(2+) and Sn(2+) have no effect on activity indicating a cysteine residue in the protein is essential for enzyme activity or to maintain the proper structure of the enzyme. Nitrite and nitrate inhibit some enzyme activity, however cyanide, azide, thiocyanate and cyanate are strong inhibitors of the enzymatic reaction. The inhibition of cyanide is competitive with formate and reversible. Catalyzes the NAD(+)-dependent oxidation of formate to carbon dioxide. Formate oxidation is the final step in the methanol oxidation pathway in methylotrophic microorganisms. Has a role in the detoxification of exogenous formate in non-methylotrophic organisms. The chain is Formate dehydrogenase from Candida boidinii (Yeast).